Here is a 207-residue protein sequence, read N- to C-terminus: Small ribosomal subunit protein uS4 (207 aa).

Residues 31–55 are disordered; the sequence is KCKLDSKPGQHGRTSGARTSDYGTQ. Residues 42–53 are compositionally biased toward polar residues; that stretch reads GRTSGARTSDYG. In terms of domain architecture, S4 RNA-binding spans 97–160; the sequence is SRLDNVVYRM…KKQARIVEAL (64 aa).

Belongs to the universal ribosomal protein uS4 family. In terms of assembly, part of the 30S ribosomal subunit. Contacts protein S5. The interaction surface between S4 and S5 is involved in control of translational fidelity.

Functionally, one of the primary rRNA binding proteins, it binds directly to 16S rRNA where it nucleates assembly of the body of the 30S subunit. In terms of biological role, with S5 and S12 plays an important role in translational accuracy. The protein is Small ribosomal subunit protein uS4 of Burkholderia orbicola (strain MC0-3).